The chain runs to 957 residues: Glycine dehydrogenase (decarboxylating) (957 aa).

Lys704 is subject to N6-(pyridoxal phosphate)lysine.

Belongs to the GcvP family. In terms of assembly, the glycine cleavage system is composed of four proteins: P, T, L and H. Pyridoxal 5'-phosphate is required as a cofactor.

It catalyses the reaction N(6)-[(R)-lipoyl]-L-lysyl-[glycine-cleavage complex H protein] + glycine + H(+) = N(6)-[(R)-S(8)-aminomethyldihydrolipoyl]-L-lysyl-[glycine-cleavage complex H protein] + CO2. Its function is as follows. The glycine cleavage system catalyzes the degradation of glycine. The P protein binds the alpha-amino group of glycine through its pyridoxal phosphate cofactor; CO(2) is released and the remaining methylamine moiety is then transferred to the lipoamide cofactor of the H protein. The polypeptide is Glycine dehydrogenase (decarboxylating) (Bordetella petrii (strain ATCC BAA-461 / DSM 12804 / CCUG 43448)).